Reading from the N-terminus, the 212-residue chain is Dephospho-CoA kinase (212 aa).

Positions 3 to 207 constitute a DPCK domain; sequence IIGLTGGIAS…RHLADDPEPG (205 aa). 11–16 lines the ATP pocket; sequence ASGKST.

This sequence belongs to the CoaE family.

It localises to the cytoplasm. The catalysed reaction is 3'-dephospho-CoA + ATP = ADP + CoA + H(+). Its pathway is cofactor biosynthesis; coenzyme A biosynthesis; CoA from (R)-pantothenate: step 5/5. Its function is as follows. Catalyzes the phosphorylation of the 3'-hydroxyl group of dephosphocoenzyme A to form coenzyme A. In Moorella thermoacetica (strain ATCC 39073 / JCM 9320), this protein is Dephospho-CoA kinase.